The sequence spans 595 residues: Adenine deaminase (595 aa).

This sequence belongs to the metallo-dependent hydrolases superfamily. Adenine deaminase family. Homodimer. Requires Mn(2+) as cofactor.

It catalyses the reaction adenine + H2O + H(+) = hypoxanthine + NH4(+). The protein is Adenine deaminase of Serratia proteamaculans (strain 568).